Reading from the N-terminus, the 1902-residue chain is PII-type proteinase (1902 aa).

Residues 1–33 (MQRKKKGLSILLAGTVALGALAVLPVGEIQAKA) form the signal peptide. Residues 34–187 (AISQQTKGSS…VTLAKVYYPT (154 aa)) constitute a propeptide that is removed on maturation. One can recognise a Peptidase S8 domain in the interval 191-697 (ANSMANVQAV…AGLVDVKAAI (507 aa)). Catalysis depends on charge relay system residues Asp217, His281, and Ser620. Residues 1796 to 1874 (GKGDGTTGTS…GALPKTGETT (79 aa)) form a disordered region. A compositionally biased stretch (gly residues) spans 1797 to 1812 (KGDGTTGTSDKGGGQG). Polar residues predominate over residues 1830–1843 (SQPSSGGNIPTNPA). An LPXTG sorting signal motif is present at residues 1867–1871 (LPKTG). Residue Thr1870 is modified to Pentaglycyl murein peptidoglycan amidated threonine. Residues 1871 to 1902 (GETTERPAFGFLGVIVVSLMGVLGLKRKQREE) constitute a propeptide, removed by sortase.

It belongs to the peptidase S8 family.

The protein localises to the secreted. It is found in the cell wall. The enzyme catalyses Endopeptidase activity with very broad specificity, although some subsite preference have been noted, e.g. large hydrophobic residues in the P1 and P4 positions, and Pro in the P2 position. Best known for its action on caseins, although it has been shown to hydrolyze hemoglobin and oxidized insulin B-chain.. In terms of biological role, protease which breaks down milk proteins during the growth of the bacteria on milk. The polypeptide is PII-type proteinase (prt) (Lactococcus lactis subsp. cremoris (Streptococcus cremoris)).